A 49-amino-acid polypeptide reads, in one-letter code: Omega-segestritoxin-Sf1a (49 aa).

4 disulfide bridges follow: C3–C22, C10–C27, C21–C48, and C29–C46.

As to expression, expressed by the venom gland.

It is found in the secreted. Its function is as follows. Potent and selective blocker of N-type voltage-gated calcium channels (Cav2.2/CACNA1B). Also blocks vertebrate Cav2.1/CACNA1A (P/Q-type) and Cav1.2/CACNA1C (L-type) channels at very high concentration (2 micromolar). This Segestria florentina (Tube-web spider) protein is Omega-segestritoxin-Sf1a.